Consider the following 151-residue polypeptide: UPF0178 protein PST_0536 (151 aa).

This sequence belongs to the UPF0178 family.

This is UPF0178 protein PST_0536 from Stutzerimonas stutzeri (strain A1501) (Pseudomonas stutzeri).